We begin with the raw amino-acid sequence, 156 residues long: Small ribosomal subunit protein uS7 (156 aa).

The protein belongs to the universal ribosomal protein uS7 family. In terms of assembly, part of the 30S ribosomal subunit. Contacts proteins S9 and S11.

One of the primary rRNA binding proteins, it binds directly to 16S rRNA where it nucleates assembly of the head domain of the 30S subunit. Is located at the subunit interface close to the decoding center, probably blocks exit of the E-site tRNA. The sequence is that of Small ribosomal subunit protein uS7 from Saccharophagus degradans (strain 2-40 / ATCC 43961 / DSM 17024).